We begin with the raw amino-acid sequence, 503 residues long: Variant surface glycoprotein AnTaT 1.1 (503 aa).

Residues 1–29 form the signal peptide; sequence MVTKERNAALKIVMLVASALTLHPQQALA. Disulfide bonds link Cys45/Cys172 and Cys154/Cys209. Asn113 carries N-linked (GlcNAc...) asparagine glycosylation. 2 N-linked (GlcNAc...) asparagine glycosylation sites follow: Asn419 and Asn432. A lipid anchor (GPI-anchor amidated aspartate) is attached at Asp480. Residues 481–503 constitute a propeptide, removed in mature form; sequence SSILLTKNFALSVVSAALVALLF.

It localises to the cell membrane. In terms of biological role, VSG forms a coat on the surface of the parasite. The trypanosome evades the immune response of the host by expressing a series of antigenically distinct VSGs from an estimated 1000 VSG genes. In Trypanosoma brucei brucei, this protein is Variant surface glycoprotein AnTaT 1.1.